The sequence spans 397 residues: Lysophospholipid transporter LplT (397 aa).

Over 1 to 17 (MSESVHTNTSLWSKGMK) the chain is Periplasmic. Residues 18–38 (AVIVAQFLSAFGDNALLFATL) traverse the membrane as a helical segment. Residues 39–52 (ALLKAQFYPEWSQP) lie on the Cytoplasmic side of the membrane. The helical transmembrane segment at 53–73 (ILQMVFVGAYILFAPFVGQVA) threads the bilayer. The Periplasmic portion of the chain corresponds to 74–90 (DSFAKGRVMMFANGLKL). The chain crosses the membrane as a helical span at residues 91–111 (LGAASICFGINPFLGYTLVGV). Over 112-144 (GAAAYSPAKYGILGELTTGSKLVKANGLMEAST) the chain is Cytoplasmic. The helical transmembrane segment at 145 to 165 (IAAILLGSVAGGVLADWHVLV) threads the bilayer. Position 166 (alanine 166) is a topological domain, periplasmic. The chain crosses the membrane as a helical span at residues 167–187 (LAACALAYGGAVVANIYIPKL). At 188 to 226 (AAARPGQSWNLINMTRSFLNACTSLWRNGETRFSLVGTS) the chain is on the cytoplasmic side. The helical transmembrane segment at 227-247 (LFWGAGVTLRFLLVLWVPVAL) threads the bilayer. Residues 248-256 (GITDNATPT) are Periplasmic-facing. The chain crosses the membrane as a helical span at residues 257-277 (YLNAMVAIGIVVGAGAAAKLV). The Cytoplasmic segment spans residues 278-280 (TLE). A helical transmembrane segment spans residues 281–301 (TMSRCMPAGILIGVVVLIFSL). Over 302-304 (QHE) the chain is Periplasmic. A helical membrane pass occupies residues 305–325 (LLPAYALLMLIGVMGGFFVVP). The Cytoplasmic segment spans residues 326-343 (LNALLQERGKKSVGAGNA). The helical transmembrane segment at 344-364 (IAVQNLGENSAMLLMLGIYSL) threads the bilayer. Residues 365–366 (AV) lie on the Periplasmic side of the membrane. A helical membrane pass occupies residues 367–387 (MVGIPVVPIGIGFGALFALAI). Residues 388-397 (TALWIWQRRH) are Cytoplasmic-facing.

The protein belongs to the major facilitator superfamily. LplT (TC 2.A.1.42) family.

It is found in the cell inner membrane. Catalyzes the facilitated diffusion of 2-acyl-glycero-3-phosphoethanolamine (2-acyl-GPE) into the cell. This is Lysophospholipid transporter LplT from Shigella sonnei (strain Ss046).